A 669-amino-acid polypeptide reads, in one-letter code: Epithelial sodium channel subunit alpha (669 aa).

The disordered stretch occupies residues 1 to 43 (MEGNKLEEQDSSPPQSTPGLMKGNKREEQGLGPEPAAPQQPTA). Residues 1–85 (MEGNKLEEQD…CSQHNRMKTA (85 aa)) lie on the Cytoplasmic side of the membrane. Residues 33 to 42 (PEPAAPQQPT) are compositionally biased toward low complexity. Residues 86–106 (FWAVLWLCTFGMMYWQFGLLF) form a helical membrane-spanning segment. The Extracellular segment spans residues 107–562 (GEYFSYPVSL…SQWSLWFGSS (456 aa)). Disulfide bonds link Cys133-Cys305, Cys229-Cys236, Cys282-Cys289, Cys394-Cys479, Cys416-Cys456, Cys416-Cys475, Cys420-Cys471, Cys429-Cys456, Cys429-Cys479, and Cys431-Cys445. The tract at residues 175 to 243 (RSRRDLRGTL…SDCFYQTYSS (69 aa)) is gating release of inhibition by proteolysis (GRIP); protease-sensitive region that is responsible for the proteolytic activation of the channel. Residues 563–583 (VLSVVEMAELVFDLLVIMFLM) form a helical membrane-spanning segment. Topologically, residues 584-669 (LLRRFRSRYW…SSSTCPLGGP (86 aa)) are cytoplasmic. A disordered region spans residues 620-669 (HPMSLSLSQPGPAPSPALTAPPPAYATLGPRPSPGGSAGASSSTCPLGGP). Residues 630–643 (GPAPSPALTAPPPA) are compositionally biased toward pro residues. Residues 640-644 (PPPAY) carry the PY motif; recruits WW domain-containing proteins and is thereby required for ubiquitination and inhibition of the channel by NEDD4 and NEDD4L motif.

This sequence belongs to the amiloride-sensitive sodium channel (TC 1.A.6) family. SCNN1A subfamily. In terms of assembly, heterotrimer; containing an alpha/SCNN1A, a beta/SCNN1B and a gamma/SCNN1G subunit. Interacts with WWP1 (via WW domains). Interacts with WWP2 (via WW domains); inhibits the channel. Interacts with BPIFA1; the interaction is indirect via SCNN1B and inhibits the proteolytic processing of SCNN1A and SCNN1G and the activation of ENaC. Interacts with the full-length immature form of PCSK9 (pro-PCSK9); inhibits ENaC by promoting its proteasomal degradation. Post-translationally, ubiquitinated. Can be ubiquitinated at multiple sites and undergo monoubiquitination and polyubiquitination. Ubiquitination by NEDD4 or NEDD4L inhibits the ENaC channel through endocytosis, intracellular retention and degradation of its individual subunits. In terms of processing, ENaC is activated through the proteolytic maturation of its subunits. Furin cleaves the SCNN1A subunit, which results in a stepwise increase in the open probability of the channel due to the release of an inhibitory tract. BPIFA1, which is recruited by the SCNN1B subunit, prevents the proteolytic activation of ENaC. N-glycosylated. In terms of tissue distribution, expressed in the female reproductive tract, from the fimbrial end of the fallopian tube to the endometrium (at protein level). Expressed in kidney (at protein level). In the respiratory tract, expressed in the bronchial epithelium (at protein level). Highly expressed in lung. Detected at intermediate levels in pancreas and liver, and at low levels in heart and placenta. in skin, expressed in keratinocytes, melanocytes and Merkel cells of the epidermal sub-layers, stratum basale, stratum spinosum and stratum granulosum (at protein level). Expressed in the outer root sheath of the hair follicles (at protein level). Detected in both peripheral and central cells of the sebaceous gland (at protein level). Expressed by eccrine sweat glands (at protein level). In skin, also expressed by arrector pili muscle cells and intradermal adipocytes. Isoform 1 and isoform 2 predominate in all tissues. Detected in lung and heart.

The protein resides in the apical cell membrane. It is found in the cell projection. The protein localises to the cilium. It localises to the cytoplasmic granule. Its subcellular location is the cytoplasm. The protein resides in the cytoplasmic vesicle. It is found in the secretory vesicle. The protein localises to the acrosome. It localises to the flagellum. It carries out the reaction Na(+)(in) = Na(+)(out). Originally identified and characterized by its inhibition by the diuretic drug amiloride. Inhibited by phenamil. In terms of biological role, this is one of the three pore-forming subunits of the heterotrimeric epithelial sodium channel (ENaC), a critical regulator of sodium balance and fluid homeostasis. ENaC operates in epithelial tissues, where it mediates the electrodiffusion of sodium ions from extracellular fluid through the apical membrane of cells, with water following osmotically. It plays a key role in maintaining sodium homeostasis through electrogenic sodium reabsorption in the kidneys. Additionally, ENaC is essential for airway surface liquid homeostasis, which is crucial for proper mucus clearance. Not functional. The polypeptide is Epithelial sodium channel subunit alpha (Homo sapiens (Human)).